Consider the following 353-residue polypeptide: Ig alpha-1 chain C region (353 aa).

The 93-residue stretch at 6-98 (PKVFPLSLCS…HYTNPSQDVT (93 aa)) folds into the Ig-like 1 domain. Cystine bridges form between C26-C85 and C77-C101. Residues 96-121 (DVTVPCRVPSTPPTPSPSTPPTPSPP) are disordered. Pro residues predominate over residues 105-121 (STPPTPSPSTPPTPSPP). Cystine bridges form between C123–C180, C147–C204, and C250–C313. Ig-like domains are found at residues 125–220 (PRLS…ATLS) and 228–330 (PEVH…KTID). Residue N144 is glycosylated (N-linked (GlcNAc...) asparagine). N340 carries an N-linked (GlcNAc...) asparagine glycan. Position 352 (C352) interacts with 3-hydroxy-L-kynurenine.

As to quaternary structure, monomeric or polymeric. 3-Hydroxykynurenine, an oxidized tryptophan metabolite that is common in biological fluids, reacts with alpha-1-microglobulin to form heterogeneous polycyclic chromophores including hydroxanthommatin. The chromophore reacts with accessible cysteines forming non-reducible thioether cross-links with Ig alpha-1 chain C region Cys-352.

In terms of biological role, ig alpha is the major immunoglobulin class in body secretions. It may serve both to defend against local infection and to prevent access of foreign antigens to the general immunologic system. In Gorilla gorilla gorilla (Western lowland gorilla), this protein is Ig alpha-1 chain C region (IGHA1).